The sequence spans 529 residues: Zinc finger protein 490 (529 aa).

Residues 1–53 form a disordered region; the sequence is MRRNSSLSFQMERPLEEQVQSKWSSSQGRTGTGGSDVLQMQNSEHHGQSIKTQ. In terms of domain architecture, KRAB spans 57–132; sequence ISLEDVAVNF…ALCENKEDCP (76 aa). C2H2-type zinc fingers lie at residues 156-178, 194-216, 222-244, 250-272, 278-300, 306-328, 334-356, 362-384, 390-412, 418-440, 446-468, 474-496, and 502-524; these read CDCSVCGEVFMHQVSLNRHMRSH, HKCKECGKTFTRSSSIRTHERIH, YECKECGKAFAFLFSFRNHIRIH, YECKECGKAFRYLTALRRHEKNH, YKCKQCGKAFIYYQPFLTHERTH, YECKQCGKAFSCPTYLRSHEKTH, FVCRECGRAFFSHSSLRKHVKTH, YTCKKCGEAFKSSSSCEVHERTH, YECKQCGKAFNSSSYLQLHERVH, YECKECGKAFLYSTHFRIHERTH, YECKQCGRVFIYFSHLRRHERSH, CECKQCGKAFTCLNSLKVHKRIH, and FQCRQCGKAFSYSKSLHVHERTH.

Belongs to the krueppel C2H2-type zinc-finger protein family.

It is found in the nucleus. Functionally, may be involved in transcriptional regulation. The sequence is that of Zinc finger protein 490 (ZNF490) from Homo sapiens (Human).